A 263-amino-acid chain; its full sequence is Ribonuclease HII (263 aa).

Positions Gln71–Asn262 constitute an RNase H type-2 domain. A divalent metal cation-binding residues include Asp77, Glu78, and Asp172.

Belongs to the RNase HII family. The cofactor is Mn(2+). Mg(2+) serves as cofactor.

It is found in the cytoplasm. The enzyme catalyses Endonucleolytic cleavage to 5'-phosphomonoester.. In terms of biological role, endonuclease that specifically degrades the RNA of RNA-DNA hybrids. The protein is Ribonuclease HII of Streptococcus pyogenes serotype M4 (strain MGAS10750).